A 330-amino-acid polypeptide reads, in one-letter code: G-protein coupled bile acid receptor 1 (330 aa).

Over 1 to 19 the chain is Extracellular; the sequence is MTPNSTGEVPGPIPRGALE. N-linked (GlcNAc...) asparagine glycosylation occurs at Asn4. Residues 20-40 traverse the membrane as a helical segment; that stretch reads LSLALASLIIAANLLLALGIA. Topologically, residues 41-50 are cytoplasmic; that stretch reads CDRRLRSPPA. A helical membrane pass occupies residues 51-71; that stretch reads GCFFLSLLLAGLLTGLALPTL. At 72 to 85 the chain is on the extracellular side; that stretch reads PGLWRQSHRGYWSC. Cysteines 85 and 155 form a disulfide. The helical transmembrane segment at 86-106 threads the bilayer; that stretch reads LLVYLAPNFSFLSLLANLLLV. The Cytoplasmic portion of the chain corresponds to 107–125; it reads HGERYVAVLRPLQPPGSIR. A helical transmembrane segment spans residues 126-146; the sequence is LALLLTWTGPLLFASLPALGW. Over 147–169 the chain is Extracellular; that stretch reads NHWGPEANCSSQTIFPAPYLYLE. Residue Asn154 is glycosylated (N-linked (GlcNAc...) asparagine). A helical membrane pass occupies residues 170–190; that stretch reads VYGLLLPAVGAAALLSAHVLL. Topologically, residues 191-230 are cytoplasmic; it reads AAHRQLQDIRRLERAVCRDAPSALARALTWRQARAQAGAT. Residues 231-251 form a helical membrane-spanning segment; sequence LLFGLCWGPYVATLFLSVLAY. Topologically, residues 252-261 are extracellular; it reads EQRPPLGPGT. The chain crosses the membrane as a helical span at residues 262 to 282; it reads LLSLLSLGSASAAAVPVAMGL. Topologically, residues 283-330 are cytoplasmic; sequence GDHRYTAPWRAAARRWLRGLRGRGSQASPGPSTAYHTSSQSSVDVDLN. The tract at residues 304–330 is disordered; sequence GRGSQASPGPSTAYHTSSQSSVDVDLN. Polar residues predominate over residues 307–330; the sequence is SQASPGPSTAYHTSSQSSVDVDLN.

It belongs to the G-protein coupled receptor 1 family. Expressed at high level in spleen. Expressed at lower level in thymus, heart, lung, liver, kidney, ileum, blood and adherent alveolar macrophage cells.

The protein localises to the cell membrane. Receptor for bile acid. Bile-acid binding induces its internalization, activation of extracellular signal-regulated kinase and intracellular cAMP production. May be involved in the suppression of macrophage functions by bile acids. Involved in bile acid promoted GLP1R secretion. This chain is G-protein coupled bile acid receptor 1 (GPBAR1), found in Oryctolagus cuniculus (Rabbit).